The following is a 506-amino-acid chain: MPNEIFTINLNAQAIIPEAFILLGIVGTLLVDLAGEKTASKWAPIICYLSIGSSLLSLALQWSNPVESAFLGSFNSDNLAISFRAIISLSTLVSLLISWRYTEQSGSPIGEFAAIVLSATLGAMLLCGSTDLISVFISLETLSVASYLLSGYLKRDPRSSEAALKYLLVGSAAAAVYLYGSSFLYGLSGSTNLATIGLEIINKPSFITSLALVFVLSTVAFKIAAVPFHQWTPDVYEGSPTPVVAFLSVGSKTAGFAFAIRILSTTFSSFDEEWKLLFTILAILSMALGNVVALAQTSMKRMLAYSSIGQAGFVMIGIVSGTQDGLSAAVLYLAAYLFMNLGAFSCVILFSLRTGSDRILDYSGLYQKDPLITLGLSLCLLSLGGLPPMLGFFGKIYLFFAGWANHQYLLVIVGLVTSVISIYYYISVIKMMVVKEPQEASEIVKSYPEINWGIVGLPPLRVALYTCVAVTALGGILSNPLFKLANTAVSETPFLQDIIATANNIS.

13 consecutive transmembrane segments (helical) span residues Ala14–Ala34, Trp42–Trp62, Leu79–Trp99, Pro108–Gly128, Leu132–Tyr152, Leu167–Leu187, Phe206–Val226, Pro240–Ile260, Leu276–Gln296, Met302–Thr322, Val330–Phe350, Leu374–Gly394, and Leu409–Ile429.

The protein belongs to the complex I subunit 2 family. NDH-1 can be composed of about 15 different subunits; different subcomplexes with different compositions have been identified which probably have different functions.

The protein resides in the cellular thylakoid membrane. It catalyses the reaction a plastoquinone + NADH + (n+1) H(+)(in) = a plastoquinol + NAD(+) + n H(+)(out). The catalysed reaction is a plastoquinone + NADPH + (n+1) H(+)(in) = a plastoquinol + NADP(+) + n H(+)(out). Functionally, NDH-1 shuttles electrons from an unknown electron donor, via FMN and iron-sulfur (Fe-S) centers, to quinones in the respiratory and/or the photosynthetic chain. The immediate electron acceptor for the enzyme in this species is believed to be plastoquinone. Couples the redox reaction to proton translocation, and thus conserves the redox energy in a proton gradient. Cyanobacterial NDH-1 also plays a role in inorganic carbon-concentration. The protein is NAD(P)H-quinone oxidoreductase subunit 2 of Prochlorococcus marinus (strain MIT 9215).